The sequence spans 87 residues: HssA/B-like protein 57 (87 aa).

It belongs to the hssA/B family.

This Dictyostelium discoideum (Social amoeba) protein is HssA/B-like protein 57 (hssl57).